A 399-amino-acid polypeptide reads, in one-letter code: MTFKTLDDLTDIAGKRVLVRVDLNVPVKDGQVTDTTRIERVAPTIRELSEKGAKVVLLAHFGRPKGEPVADMSLKTIASAVEEILDQRVYFAPDCIGDKAANAIADLNDGEVLLLENTRFHKGEEKNDPAFVTALAANGDIYVNDAFSAAHRAHASTEGLAQHLPAYAGRTMQAELEALEKGLGNPQRPVVAIVGGAKVSTKIDLLQNLVKKVDALVIGGGMANTFLAAQGVDVGKSLCEHDLAETAKAILAAASEAGCAIVLPVDGVVAREFKAGADNEVVDVKAIPADAMMLDVGPKSIDAINEWISRAETLVWNGPLGAFEITPFDKATVAAAKHAAARTRSGSLVSVAGGGDTVAALNHAEVADDFTYVSTAGGAFLEWMEGKPLPGVDILKQQR.

Residues 22–24 (DLN), R37, 60–63 (HFGR), R119, and R152 contribute to the substrate site. ATP-binding positions include K202, E324, and 354–357 (GGDT).

Belongs to the phosphoglycerate kinase family. As to quaternary structure, monomer.

It is found in the cytoplasm. The enzyme catalyses (2R)-3-phosphoglycerate + ATP = (2R)-3-phospho-glyceroyl phosphate + ADP. It participates in carbohydrate degradation; glycolysis; pyruvate from D-glyceraldehyde 3-phosphate: step 2/5. The chain is Phosphoglycerate kinase from Sinorhizobium medicae (strain WSM419) (Ensifer medicae).